A 542-amino-acid polypeptide reads, in one-letter code: Putative cysteine ligase BshC (542 aa).

A coiled-coil region spans residues 458–487 (VAKNAAIIQAQIEFLQQTLERALLSKHEVE).

Belongs to the BshC family.

Involved in bacillithiol (BSH) biosynthesis. May catalyze the last step of the pathway, the addition of cysteine to glucosamine malate (GlcN-Mal) to generate BSH. The chain is Putative cysteine ligase BshC from Geobacillus thermodenitrificans (strain NG80-2).